A 311-amino-acid chain; its full sequence is Mediator of RNA polymerase II transcription subunit 27-B (311 aa).

Belongs to the Mediator complex subunit 27 family. As to quaternary structure, component of the Mediator complex.

It localises to the nucleus. Its function is as follows. Component of the Mediator complex, a coactivator involved in the regulated transcription of nearly all RNA polymerase II-dependent genes. Mediator functions as a bridge to convey information from gene-specific regulatory proteins to the basal RNA polymerase II transcription machinery. Mediator is recruited to promoters by direct interactions with regulatory proteins and serves as a scaffold for the assembly of a functional preinitiation complex with RNA polymerase II and the general transcription factors. In Xenopus laevis (African clawed frog), this protein is Mediator of RNA polymerase II transcription subunit 27-B (med27-b).